Reading from the N-terminus, the 255-residue chain is Hydroxyethylthiazole kinase (255 aa).

Residue Met38 coordinates substrate. ATP is bound by residues Arg114 and Thr160. Gly187 is a binding site for substrate.

This sequence belongs to the Thz kinase family. It depends on Mg(2+) as a cofactor.

The enzyme catalyses 5-(2-hydroxyethyl)-4-methylthiazole + ATP = 4-methyl-5-(2-phosphooxyethyl)-thiazole + ADP + H(+). Its pathway is cofactor biosynthesis; thiamine diphosphate biosynthesis; 4-methyl-5-(2-phosphoethyl)-thiazole from 5-(2-hydroxyethyl)-4-methylthiazole: step 1/1. In terms of biological role, catalyzes the phosphorylation of the hydroxyl group of 4-methyl-5-beta-hydroxyethylthiazole (THZ). The chain is Hydroxyethylthiazole kinase from Lysinibacillus sphaericus (strain C3-41).